The following is a 633-amino-acid chain: Peptidoglycan D,D-transpeptidase MrdA (633 aa).

The chain crosses the membrane as a helical span at residues 22–42; that stretch reads LVAFLGILLLTGVLIANLYNL. The active-site Acyl-ester intermediate is the Ser-330.

It belongs to the transpeptidase family. MrdA subfamily.

The protein localises to the cell inner membrane. The enzyme catalyses Preferential cleavage: (Ac)2-L-Lys-D-Ala-|-D-Ala. Also transpeptidation of peptidyl-alanyl moieties that are N-acyl substituents of D-alanine.. Its pathway is cell wall biogenesis; peptidoglycan biosynthesis. Catalyzes cross-linking of the peptidoglycan cell wall. The protein is Peptidoglycan D,D-transpeptidase MrdA of Escherichia coli O157:H7.